Here is a 156-residue protein sequence, read N- to C-terminus: Lipoprotein signal peptidase (156 aa).

4 consecutive transmembrane segments (helical) span residues 8–28 (IYINIIFFIITVDFYSKKWIL), 39–59 (VFFILNLFHVHNFGAAFSILS), 67–87 (YFLLIFSIIIILAIIKIMIKF), and 99–119 (SLILAGAIGNLIDRINYGFVI). Active-site residues include aspartate 120 and aspartate 138. Residues 129–149 (WHFATFNIADFSIFIGMIMII) form a helical membrane-spanning segment.

This sequence belongs to the peptidase A8 family.

It is found in the cell inner membrane. It carries out the reaction Release of signal peptides from bacterial membrane prolipoproteins. Hydrolyzes -Xaa-Yaa-Zaa-|-(S,diacylglyceryl)Cys-, in which Xaa is hydrophobic (preferably Leu), and Yaa (Ala or Ser) and Zaa (Gly or Ala) have small, neutral side chains.. It functions in the pathway protein modification; lipoprotein biosynthesis (signal peptide cleavage). This protein specifically catalyzes the removal of signal peptides from prolipoproteins. The polypeptide is Lipoprotein signal peptidase (Buchnera aphidicola subsp. Schizaphis graminum (strain Sg)).